The following is a 209-amino-acid chain: Kynurenine formamidase (209 aa).

Trp20 is a substrate binding site. Zn(2+) is bound by residues His50, His54, and Asp56. His60 (proton donor/acceptor) is an active-site residue. Zn(2+) contacts are provided by His161 and Glu173.

It belongs to the Cyclase 1 superfamily. KynB family. As to quaternary structure, homodimer. It depends on Zn(2+) as a cofactor.

It catalyses the reaction N-formyl-L-kynurenine + H2O = L-kynurenine + formate + H(+). Its pathway is amino-acid degradation; L-tryptophan degradation via kynurenine pathway; L-kynurenine from L-tryptophan: step 2/2. Functionally, catalyzes the hydrolysis of N-formyl-L-kynurenine to L-kynurenine, the second step in the kynurenine pathway of tryptophan degradation. This Bacillus thuringiensis subsp. konkukian (strain 97-27) protein is Kynurenine formamidase.